Here is a 177-residue protein sequence, read N- to C-terminus: Bifunctional protein PyrR (177 aa).

Residues S42 to R43, D104 to T112, and R137 each bind substrate. Residues V100–T112 carry the PRPP-binding motif.

Belongs to the purine/pyrimidine phosphoribosyltransferase family. PyrR subfamily.

It catalyses the reaction UMP + diphosphate = 5-phospho-alpha-D-ribose 1-diphosphate + uracil. Functionally, regulates the transcription of the pyrimidine nucleotide (pyr) operon in response to exogenous pyrimidines. In terms of biological role, also displays a weak uracil phosphoribosyltransferase activity which is not physiologically significant. The polypeptide is Bifunctional protein PyrR (Fusobacterium nucleatum subsp. nucleatum (strain ATCC 25586 / DSM 15643 / BCRC 10681 / CIP 101130 / JCM 8532 / KCTC 2640 / LMG 13131 / VPI 4355)).